The chain runs to 328 residues: GMP reductase (328 aa).

Catalysis depends on cysteine 176, which acts as the Thioimidate intermediate. 205 to 228 contacts NADP(+); the sequence is IIADGGIRTHGDIAKSIRFGASMI.

This sequence belongs to the IMPDH/GMPR family. GuaC type 2 subfamily.

The catalysed reaction is IMP + NH4(+) + NADP(+) = GMP + NADPH + 2 H(+). In terms of biological role, catalyzes the irreversible NADPH-dependent deamination of GMP to IMP. It functions in the conversion of nucleobase, nucleoside and nucleotide derivatives of G to A nucleotides, and in maintaining the intracellular balance of A and G nucleotides. This is GMP reductase from Streptococcus pneumoniae (strain CGSP14).